A 576-amino-acid chain; its full sequence is Arginine--tRNA ligase (576 aa).

The 'HIGH' region motif lies at 123–133 (PNIGKEMHVGH).

This sequence belongs to the class-I aminoacyl-tRNA synthetase family. As to quaternary structure, monomer.

It is found in the cytoplasm. The enzyme catalyses tRNA(Arg) + L-arginine + ATP = L-arginyl-tRNA(Arg) + AMP + diphosphate. The polypeptide is Arginine--tRNA ligase (Wigglesworthia glossinidia brevipalpis).